The primary structure comprises 51 residues: MRDKIKLVSTAGTGYFYTTTKNKRTMPGKMEIKKFDPKVRQHVIFKEAKIK.

It belongs to the bacterial ribosomal protein bL33 family.

This is Large ribosomal subunit protein bL33 from Psychrobacter sp. (strain PRwf-1).